The following is an 862-amino-acid chain: Leucine--tRNA ligase (862 aa).

The short motif at 42-52 is the 'HIGH' region element; sequence PYPSGRLHMGH. The 'KMSKS' region motif lies at 622 to 626; that stretch reads KMSKS. Lys625 lines the ATP pocket.

This sequence belongs to the class-I aminoacyl-tRNA synthetase family.

It is found in the cytoplasm. It catalyses the reaction tRNA(Leu) + L-leucine + ATP = L-leucyl-tRNA(Leu) + AMP + diphosphate. This is Leucine--tRNA ligase from Vibrio campbellii (strain ATCC BAA-1116).